We begin with the raw amino-acid sequence, 76 residues long: Kappa-actitoxin-Avd4l (76 aa).

A signal peptide spans 1-19 (MNKALFLCLVVLCAAVVFA). Residues 20 to 31 (AEDLQKAKHAPF) constitute a propeptide that is removed on maturation. 3 disulfide bridges follow: cysteine 37–cysteine 72, cysteine 39–cysteine 65, and cysteine 55–cysteine 73.

The protein belongs to the sea anemone type 3 (BDS) potassium channel toxin family. As to expression, weakly expressed in the ectodermal tissue from the distal and proximal tentacles, body wall, and oral disk.

It is found in the secreted. The protein localises to the nematocyst. Blocks Kv3 voltage-gated potassium channels. Reduces blood pressure. This is Kappa-actitoxin-Avd4l from Anemonia viridis (Snakelocks anemone).